A 130-amino-acid polypeptide reads, in one-letter code: Profilin-1 (130 aa).

Belongs to the profilin family. As to quaternary structure, interacts with actin. Interacts with RHO1 (GTP-bound form).

The protein localises to the cytoplasm. It localises to the cytoskeleton. Its subcellular location is the cell projection. The protein resides in the phagocytic cup. It is found in the cytoplasmic vesicle. The protein localises to the phagosome. Binds to actin and affects the structure of the cytoskeleton. At high concentrations, profilin prevents the polymerization of actin, whereas it enhances it at low concentrations. By binding to PIP2, it inhibits the formation of IP3 and DG. The protein is Profilin-1 of Entamoeba histolytica (strain ATCC 30459 / HM-1:IMSS / ABRM).